A 275-amino-acid chain; its full sequence is 2,3,4,5-tetrahydropyridine-2,6-dicarboxylate N-succinyltransferase (275 aa).

Substrate-binding residues include R106 and D143.

This sequence belongs to the transferase hexapeptide repeat family. Homotrimer.

The protein localises to the cytoplasm. It carries out the reaction (S)-2,3,4,5-tetrahydrodipicolinate + succinyl-CoA + H2O = (S)-2-succinylamino-6-oxoheptanedioate + CoA. It participates in amino-acid biosynthesis; L-lysine biosynthesis via DAP pathway; LL-2,6-diaminopimelate from (S)-tetrahydrodipicolinate (succinylase route): step 1/3. In Burkholderia mallei (strain NCTC 10247), this protein is 2,3,4,5-tetrahydropyridine-2,6-dicarboxylate N-succinyltransferase.